Reading from the N-terminus, the 554-residue chain is Afadin- and alpha-actinin-binding protein A (554 aa).

Coiled-coil stretches lie at residues 122–287 (LEYL…SQRK) and 359–449 (ENGL…AIRL). The segment at 508-528 (LASSGDYSRRPSKALPITSSS) is disordered.

It belongs to the ADIP family. Interacts with WRAP73.

Its subcellular location is the cell junction. It is found in the adherens junction. It localises to the cytoplasm. The protein resides in the cytoskeleton. The protein localises to the microtubule organizing center. Its subcellular location is the centrosome. It is found in the centriolar satellite. Functionally, belongs to an adhesion system, which plays a role in the organization of homotypic, interneuronal and heterotypic cell-cell adherens junctions (AJs). Involved in cell movement. Acts as a centrosome maturation factor, probably by maintaining the integrity of the pericentriolar material and proper microtubule nucleation at mitotic spindle poles. The function seems to implicate at least in part WRAP73; the SSX2IP:WRAP73 complex is proposed to act as regulator of spindle anchoring at the mitotic centrosome. The polypeptide is Afadin- and alpha-actinin-binding protein A (ssx2ip-a) (Xenopus laevis (African clawed frog)).